We begin with the raw amino-acid sequence, 348 residues long: tRNA pseudouridine synthase D (348 aa).

Substrate is bound at residue Phe27. Asp80 serves as the catalytic Nucleophile. Substrate is bound at residue Asn129. In terms of domain architecture, TRUD spans 155–303 (GVPNYFGSQR…VEPARRAVLL (149 aa)). Phe329 contacts substrate.

This sequence belongs to the pseudouridine synthase TruD family.

It carries out the reaction uridine(13) in tRNA = pseudouridine(13) in tRNA. Functionally, responsible for synthesis of pseudouridine from uracil-13 in transfer RNAs. The protein is tRNA pseudouridine synthase D of Pectobacterium atrosepticum (strain SCRI 1043 / ATCC BAA-672) (Erwinia carotovora subsp. atroseptica).